A 171-amino-acid chain; its full sequence is 3-hydroxydecanoyl-[acyl-carrier-protein] dehydratase (171 aa).

His-70 is a catalytic residue.

The protein belongs to the thioester dehydratase family. FabA subfamily. As to quaternary structure, homodimer.

Its subcellular location is the cytoplasm. It catalyses the reaction a (3R)-hydroxyacyl-[ACP] = a (2E)-enoyl-[ACP] + H2O. The catalysed reaction is (3R)-hydroxydecanoyl-[ACP] = (2E)-decenoyl-[ACP] + H2O. It carries out the reaction (2E)-decenoyl-[ACP] = (3Z)-decenoyl-[ACP]. It participates in lipid metabolism; fatty acid biosynthesis. Functionally, necessary for the introduction of cis unsaturation into fatty acids. Catalyzes the dehydration of (3R)-3-hydroxydecanoyl-ACP to E-(2)-decenoyl-ACP and then its isomerization to Z-(3)-decenoyl-ACP. Can catalyze the dehydratase reaction for beta-hydroxyacyl-ACPs with saturated chain lengths up to 16:0, being most active on intermediate chain length. In Hydrogenovibrio crunogenus (strain DSM 25203 / XCL-2) (Thiomicrospira crunogena), this protein is 3-hydroxydecanoyl-[acyl-carrier-protein] dehydratase.